A 305-amino-acid chain; its full sequence is Alpha-N-acetylgalactosaminide alpha-2,6-sialyltransferase 3 (305 aa).

The Cytoplasmic segment spans residues M1–K8. Residues P9–V28 form a helical; Signal-anchor for type II membrane protein membrane-spanning segment. The Lumenal segment spans residues N29–S305. C80 and C229 are disulfide-bonded. N-linked (GlcNAc...) asparagine glycans are attached at residues N239 and N301.

The protein belongs to the glycosyltransferase 29 family. In terms of tissue distribution, in adult tissues, high expression in brain, lung and heart and to a lesser extent in kidney, mammary gland, spleen, testis and thymus.

The protein localises to the golgi apparatus membrane. The enzyme catalyses an alpha-Neu5Ac-(2-&gt;3)-beta-D-Gal-(1-&gt;3)-D-GlcNAc derivative + CMP-N-acetyl-beta-neuraminate = an alpha-Neu5Ac-(2-&gt;3)-beta-D-Gal-(1-&gt;3)-[alpha-Neu5Ac-(2-&gt;6)]-D-GlcNAc derivative + CMP + H(+). The catalysed reaction is a ganglioside GM1b (d18:1(4E)) + CMP-N-acetyl-beta-neuraminate = a ganglioside GD1alpha (d18:1(4E)) + CMP + H(+). It catalyses the reaction a globoside MSGG + CMP-N-acetyl-beta-neuraminate = a globoside DSGG + CMP + H(+). It carries out the reaction 3-O-[alpha-Neu5Ac-(2-&gt;3)-beta-D-Gal-(1-&gt;3)-alpha-D-GalNAc]-L-Ser-[protein] + CMP-N-acetyl-beta-neuraminate = a 3-O-{alpha-Neu5Ac-(2-&gt;3)-beta-D-Gal-(1-&gt;3)-[alpha-Neu5Ac-(2-&gt;6)]-alpha-D-GalNAc}-L-seryl-[protein] + CMP + H(+). The enzyme catalyses 3-O-[alpha-Neu5Ac-(2-&gt;3)-beta-D-Gal-(1-&gt;3)-alpha-D-GalNAc]-L-Thr-[protein] + CMP-N-acetyl-beta-neuraminate = a 3-O-{alpha-Neu5Ac-(2-&gt;3)-beta-D-Gal-(1-&gt;3)-[alpha-Neu5Ac-(2-&gt;6)]-alpha-D-GalNAc}-L-threonyl-[protein] + CMP + H(+). Its pathway is protein modification; protein glycosylation. It functions in the pathway glycolipid biosynthesis. Functionally, transfers the sialyl group (N-acetyl-alpha-neuraminyl or NeuAc) from CMP-NeuAc to the GalNAc residue on the NeuAc-alpha-2,3-Gal-beta-1,3-GalNAc sequence of glycoproteins and glycolipids forming an alpha-2,6-linkage. Produces branched type disialyl structures by transfer of a sialyl group onto a GalNAc residue inside the backbone core chains. ST6GalNAcIII prefers glycolipids to glycoproteins, predominantly catalyzing the biosynthesis of ganglioside GD1alpha from GM1b. GD1alpha is a critical molecule in the communication and interaction between neuronal cells and their supportive cells, particularly in brain tissues, and functions as an adhesion molecule in the process of metastasis. Sialylation of glycoproteins or glycosphingolipids is very important in tumor development, neuronal development, nerve repair, immunological processes and regulation of hormone sensitivity. This Mus musculus (Mouse) protein is Alpha-N-acetylgalactosaminide alpha-2,6-sialyltransferase 3 (St6galnac3).